A 424-amino-acid chain; its full sequence is Adenylosuccinate synthetase (424 aa).

GTP is bound by residues 12 to 18 and 40 to 42; these read GDEGKGK and GHT. Asp-13 acts as the Proton acceptor in catalysis. Residues Asp-13 and Gly-40 each coordinate Mg(2+). IMP is bound by residues 13–16, 38–41, Thr-130, Arg-144, Asn-220, Thr-235, and Arg-299; these read DEGK and NAGH. His-41 (proton donor) is an active-site residue. 295 to 301 serves as a coordination point for substrate; that stretch reads VTTGRRR. Residues Arg-301, 327-329, and 412-414 each bind GTP; these read KLD and GTG.

Belongs to the adenylosuccinate synthetase family. As to quaternary structure, homodimer. The cofactor is Mg(2+).

It localises to the cytoplasm. The enzyme catalyses IMP + L-aspartate + GTP = N(6)-(1,2-dicarboxyethyl)-AMP + GDP + phosphate + 2 H(+). It participates in purine metabolism; AMP biosynthesis via de novo pathway; AMP from IMP: step 1/2. Its function is as follows. Plays an important role in the de novo pathway and in the salvage pathway of purine nucleotide biosynthesis. Catalyzes the first committed step in the biosynthesis of AMP from IMP. This Aspergillus flavus (strain ATCC 200026 / FGSC A1120 / IAM 13836 / NRRL 3357 / JCM 12722 / SRRC 167) protein is Adenylosuccinate synthetase.